A 389-amino-acid polypeptide reads, in one-letter code: Probable tRNA sulfurtransferase (389 aa).

Residues 57-165 form the THUMP domain; sequence DEALDRLSKI…EDETYIYHRV (109 aa). Residues 183 to 184, lysine 267, glycine 289, and glutamine 298 each bind ATP; that span reads LL.

The protein belongs to the ThiI family.

The protein resides in the cytoplasm. The enzyme catalyses [ThiI sulfur-carrier protein]-S-sulfanyl-L-cysteine + a uridine in tRNA + 2 reduced [2Fe-2S]-[ferredoxin] + ATP + H(+) = [ThiI sulfur-carrier protein]-L-cysteine + a 4-thiouridine in tRNA + 2 oxidized [2Fe-2S]-[ferredoxin] + AMP + diphosphate. The catalysed reaction is [ThiS sulfur-carrier protein]-C-terminal Gly-Gly-AMP + S-sulfanyl-L-cysteinyl-[cysteine desulfurase] + AH2 = [ThiS sulfur-carrier protein]-C-terminal-Gly-aminoethanethioate + L-cysteinyl-[cysteine desulfurase] + A + AMP + 2 H(+). It participates in cofactor biosynthesis; thiamine diphosphate biosynthesis. In terms of biological role, catalyzes the ATP-dependent transfer of a sulfur to tRNA to produce 4-thiouridine in position 8 of tRNAs, which functions as a near-UV photosensor. Also catalyzes the transfer of sulfur to the sulfur carrier protein ThiS, forming ThiS-thiocarboxylate. This is a step in the synthesis of thiazole, in the thiamine biosynthesis pathway. The sulfur is donated as persulfide by IscS. In Methanothermobacter thermautotrophicus (strain ATCC 29096 / DSM 1053 / JCM 10044 / NBRC 100330 / Delta H) (Methanobacterium thermoautotrophicum), this protein is Probable tRNA sulfurtransferase.